The chain runs to 508 residues: Endoglucanase 6 (508 aa).

Residues M1–G33 form the signal peptide. Catalysis depends on D89, which acts as the Nucleophile. Catalysis depends on residues H419, D471, and E480.

The protein belongs to the glycosyl hydrolase 9 (cellulase E) family.

Its subcellular location is the secreted. The catalysed reaction is Endohydrolysis of (1-&gt;4)-beta-D-glucosidic linkages in cellulose, lichenin and cereal beta-D-glucans.. This is Endoglucanase 6 from Oryza sativa subsp. japonica (Rice).